Consider the following 335-residue polypeptide: Glycerol-3-phosphate dehydrogenase [NAD(P)+] (335 aa).

4 residues coordinate NADPH: Ser-10, Phe-11, Arg-31, and Lys-105. Residues Lys-105, Gly-136, and Ser-138 each coordinate sn-glycerol 3-phosphate. NADPH is bound at residue Ala-140. Positions 191, 244, 254, 255, and 256 each coordinate sn-glycerol 3-phosphate. The active-site Proton acceptor is the Lys-191. Arg-255 provides a ligand contact to NADPH. Residues Val-279 and Glu-281 each contribute to the NADPH site.

It belongs to the NAD-dependent glycerol-3-phosphate dehydrogenase family.

It localises to the cytoplasm. It carries out the reaction sn-glycerol 3-phosphate + NAD(+) = dihydroxyacetone phosphate + NADH + H(+). It catalyses the reaction sn-glycerol 3-phosphate + NADP(+) = dihydroxyacetone phosphate + NADPH + H(+). It participates in membrane lipid metabolism; glycerophospholipid metabolism. Its function is as follows. Catalyzes the reduction of the glycolytic intermediate dihydroxyacetone phosphate (DHAP) to sn-glycerol 3-phosphate (G3P), the key precursor for phospholipid synthesis. The polypeptide is Glycerol-3-phosphate dehydrogenase [NAD(P)+] (Leptospira borgpetersenii serovar Hardjo-bovis (strain L550)).